The following is a 239-amino-acid chain: 7-cyano-7-deazaguanine synthase (239 aa).

Residue 13–23 coordinates ATP; sequence LSGGQDSATCL. Positions 199, 214, 217, and 220 each coordinate Zn(2+).

It belongs to the QueC family. Zn(2+) serves as cofactor.

The enzyme catalyses 7-carboxy-7-deazaguanine + NH4(+) + ATP = 7-cyano-7-deazaguanine + ADP + phosphate + H2O + H(+). It functions in the pathway purine metabolism; 7-cyano-7-deazaguanine biosynthesis. Functionally, catalyzes the ATP-dependent conversion of 7-carboxy-7-deazaguanine (CDG) to 7-cyano-7-deazaguanine (preQ(0)). The chain is 7-cyano-7-deazaguanine synthase from Acidovorax ebreus (strain TPSY) (Diaphorobacter sp. (strain TPSY)).